The following is a 251-amino-acid chain: MLIIPAIDLKDGHCVRLEQGEMDKATVFSEDPAAMARRWKEHGARRLHLVDLNGAFAGKPVNDAAIQAIVEAVGDEMPVQLGGGIRDLATIERYLDDGVRYVIIGTAAVKNPGFLHEACDAFPGHVMVGLDARDGKVAVEGWSKLTGHDVVDLAKRFEGYGVEAVIYTDIGRDGMLTGVNIDATQRLAQALSIPVIASGGVTNLDDVRGLSAVAKDGIIGAITGRAIYQGTLDFAEAQKLADELAGGVFGV.

The active-site Proton acceptor is Asp8. The Proton donor role is filled by Asp131.

The protein belongs to the HisA/HisF family.

Its subcellular location is the cytoplasm. It catalyses the reaction 1-(5-phospho-beta-D-ribosyl)-5-[(5-phospho-beta-D-ribosylamino)methylideneamino]imidazole-4-carboxamide = 5-[(5-phospho-1-deoxy-D-ribulos-1-ylimino)methylamino]-1-(5-phospho-beta-D-ribosyl)imidazole-4-carboxamide. Its pathway is amino-acid biosynthesis; L-histidine biosynthesis; L-histidine from 5-phospho-alpha-D-ribose 1-diphosphate: step 4/9. In Thiobacillus denitrificans (strain ATCC 25259 / T1), this protein is 1-(5-phosphoribosyl)-5-[(5-phosphoribosylamino)methylideneamino] imidazole-4-carboxamide isomerase.